Consider the following 86-residue polypeptide: Small ribosomal subunit protein bS20 (86 aa).

Positions 1 to 27 are disordered; the sequence is MANNKSAKKRAIQAEKRRQHNASRRSM.

This sequence belongs to the bacterial ribosomal protein bS20 family.

Its function is as follows. Binds directly to 16S ribosomal RNA. The chain is Small ribosomal subunit protein bS20 from Vibrio cholerae serotype O1 (strain ATCC 39541 / Classical Ogawa 395 / O395).